The chain runs to 220 residues: Deoxyribose-phosphate aldolase (220 aa).

Asp89 (proton donor/acceptor) is an active-site residue. Catalysis depends on Lys151, which acts as the Schiff-base intermediate with acetaldehyde. Lys180 acts as the Proton donor/acceptor in catalysis.

This sequence belongs to the DeoC/FbaB aldolase family. DeoC type 1 subfamily.

The protein resides in the cytoplasm. It carries out the reaction 2-deoxy-D-ribose 5-phosphate = D-glyceraldehyde 3-phosphate + acetaldehyde. The protein operates within carbohydrate degradation; 2-deoxy-D-ribose 1-phosphate degradation; D-glyceraldehyde 3-phosphate and acetaldehyde from 2-deoxy-alpha-D-ribose 1-phosphate: step 2/2. Functionally, catalyzes a reversible aldol reaction between acetaldehyde and D-glyceraldehyde 3-phosphate to generate 2-deoxy-D-ribose 5-phosphate. The chain is Deoxyribose-phosphate aldolase from Macrococcus caseolyticus (strain JCSC5402) (Macrococcoides caseolyticum).